The primary structure comprises 553 residues: Methyl-coenzyme M reductase II subunit alpha (553 aa).

Glutamine 150 is a coenzyme F430 binding site. Residues arginine 228, 259-260 (KH), and arginine 273 contribute to the coenzyme B site. Pros-methylhistidine is present on histidine 260. Arginine 274 carries the 5-methylarginine modification. Tyrosine 335 is a coenzyme M binding site. Glutamine 402 carries the 2-methylglutamine modification. Tyrosine 446 serves as a coordination point for coenzyme M. Glycine 447 carries the post-translational modification 1-thioglycine. Aspartate 452 is subject to (Z)-2,3-didehydroaspartate. The residue at position 454 (cysteine 454) is an S-methylcysteine.

This sequence belongs to the methyl-coenzyme M reductase alpha subunit family. In terms of assembly, MCR is a hexamer of two alpha, two beta, and two gamma chains, forming a dimer of heterotrimers. The cofactor is coenzyme F430. Post-translationally, the alpha subunit contains six modified amino acids near the active site region. Is methylated on His-260, Arg-274, Gln-402 and Cys-454, probably by the action of specific S-adenosylmethionine-dependent methyltransferases. Also contains a thioglycine at position 447, forming a thiopeptide bond. Contains a didehydroaspartate residue at position 452. The methylation on C5 of Arg-274 is a post-translational methylation not essential in vivo, but which plays a role for the stability and structural integrity of MCR.

It carries out the reaction coenzyme B + methyl-coenzyme M = methane + coenzyme M-coenzyme B heterodisulfide. The protein operates within one-carbon metabolism; methyl-coenzyme M reduction; methane from methyl-coenzyme M: step 1/1. Component of the methyl-coenzyme M reductase (MCR) I that catalyzes the reductive cleavage of methyl-coenzyme M (CoM-S-CH3 or 2-(methylthio)ethanesulfonate) using coenzyme B (CoB or 7-mercaptoheptanoylthreonine phosphate) as reductant which results in the production of methane and the mixed heterodisulfide of CoB and CoM (CoM-S-S-CoB). This is the final step in methanogenesis. The polypeptide is Methyl-coenzyme M reductase II subunit alpha (mrtA) (Methanothermobacter thermautotrophicus (strain ATCC 29096 / DSM 1053 / JCM 10044 / NBRC 100330 / Delta H) (Methanobacterium thermoautotrophicum)).